An 844-amino-acid chain; its full sequence is Penicillin-binding protein 1B (844 aa).

The span at 1 to 10 (MAGNDREPIG) shows a compositional bias: basic and acidic residues. The tract at residues 1–60 (MAGNDREPIGRKGKPTRPVKQKVSRRRYEDDDDYDDYDDYEDEEPMPRKGKGKGKGRKPR) is disordered. Topologically, residues 1–63 (MAGNDREPIG…GKGRKPRGKR (63 aa)) are cytoplasmic. Positions 11–25 (RKGKPTRPVKQKVSR) are enriched in basic residues. Positions 30-44 (DDDDYDDYDDYEDEE) are enriched in acidic residues. The span at 48 to 60 (RKGKGKGKGRKPR) shows a compositional bias: basic residues. The chain crosses the membrane as a helical; Signal-anchor for type II membrane protein span at residues 64–87 (GWLWLLLKLAIVFAVLIAIYGVYL). A membrane association region spans residues 88 to 250 (DQKIRSRIDG…DGISLYSIGR (163 aa)). The Periplasmic portion of the chain corresponds to 88 to 844 (DQKIRSRIDG…GWIKDMFGSN (757 aa)). The interval 109-200 (RMVNLEPDMT…QFGFFRLDPR (92 aa)) is uvrB domain 2 homolog. The transglycosylase stretch occupies residues 195–367 (FRLDPRLITM…SIYNPWRNPK (173 aa)). Glutamate 233 (proton donor; for transglycosylase activity) is an active-site residue. Residues 444–736 (SVAQDAAEKA…NNQPTKLYGA (293 aa)) are transpeptidase. Serine 510 (acyl-ester intermediate; for transpeptidase activity) is an active-site residue. Residues 793–825 (LCQQSEMQQQPSGNPFDQSSQPQQQPQQQPAQQ) are compositionally biased toward low complexity. The segment at 793-835 (LCQQSEMQQQPSGNPFDQSSQPQQQPQQQPAQQEQKDSDGVAG) is disordered.

In the N-terminal section; belongs to the glycosyltransferase 51 family. This sequence in the C-terminal section; belongs to the transpeptidase family. As to quaternary structure, forms a trimeric complex with MipA and MltA. Has also been shown to exist as monomer or homodimer; homodimer of Alpha and Gamma isozymes can be found. Interacts with UvrA, FtsL and FtsN.

It is found in the cell inner membrane. It carries out the reaction [GlcNAc-(1-&gt;4)-Mur2Ac(oyl-L-Ala-gamma-D-Glu-L-Lys-D-Ala-D-Ala)](n)-di-trans,octa-cis-undecaprenyl diphosphate + beta-D-GlcNAc-(1-&gt;4)-Mur2Ac(oyl-L-Ala-gamma-D-Glu-L-Lys-D-Ala-D-Ala)-di-trans,octa-cis-undecaprenyl diphosphate = [GlcNAc-(1-&gt;4)-Mur2Ac(oyl-L-Ala-gamma-D-Glu-L-Lys-D-Ala-D-Ala)](n+1)-di-trans,octa-cis-undecaprenyl diphosphate + di-trans,octa-cis-undecaprenyl diphosphate + H(+). It catalyses the reaction Preferential cleavage: (Ac)2-L-Lys-D-Ala-|-D-Ala. Also transpeptidation of peptidyl-alanyl moieties that are N-acyl substituents of D-alanine.. Its pathway is cell wall biogenesis; peptidoglycan biosynthesis. Functionally, cell wall formation. Synthesis of cross-linked peptidoglycan from the lipid intermediates. The enzyme has a penicillin-insensitive transglycosylase N-terminal domain (formation of linear glycan strands) and a penicillin-sensitive transpeptidase C-terminal domain (cross-linking of the peptide subunits). The protein is Penicillin-binding protein 1B (mrcB) of Escherichia coli (strain K12).